An 870-amino-acid polypeptide reads, in one-letter code: MAETLLSFGVEKLWDLLVRESDRFQGVKKQFNELRSDLNKLRCFLEDADAKKHQSAMVSNTVKEVKEIVYDTEDIIETFLRKKQLGRTRGMKKRIKEFACVLPDRRKIAIDMEGLSKRIAKKDKRNMRQTFSNNNESVLVGLEENVKKLVGHLVEVEDSSQVVSITGMGGIGKTTLARQVFNHETVKSHFAQLAWVCVSQQFTRKYVWQTILRKVGPEYIKLEMTEDELQEKLFRLLGTRKALIVLDDIWREEDWDMIEPIFPLGKGWKVLLTSRNEGVALRANPNGFIFKPDCLTPEESWTIFRRIVFPGENTTEYKVDEKMEELGKQMIKHCGGLPLALKVLGGLLVVHFTLDEWKRIYGNIKSHIVGGTSFNDKNMSSVYHILHLSFEELPIYLKHCFLYLAQFPEDFTIDLEKLSYYWAAEGMPRPRYYDGATIRKVGDGYIEELVKRNMVISERDARTRRFETCHLHDIVREVCLKAEEENLIETENSKSPSKPRRLVVKGGDKTDMEGKLKNPKLRSLLFIEELGGYRGFEVWFTRLQLMRVLDLHGVEFGGELPSSIGLLIHLRYLSLYRAKASHLPSSMQNLKMLLYLNLCVQESCYIYIPNFLKEMLELKYLSLPLRMDDKVKLELGNLVNLEKLENFSTEHGGVGDLQFMTRLRALSIYIRGRLNMKTLSSSLSKLRDLENLTICYYPMYAPMSGIEGLVLDCDQLKHLNLRIYMPRLPDEQHFPWHLRNISLAECCLKEDPMPILEKLLQLNEVSLSHQSFCGKRMVCSDGGFPQLQKLDLCGLEEWEEWIVEEGSMPRLHKLTIRNDPKLKELPDGLKFITSLKEVHVILNNWDFKKKLSRGGEDYYKVQHIPLVRFL.

The region spanning 123–432 is the NB-ARC domain; sequence DKRNMRQTFS…AAEGMPRPRY (310 aa). Residue 167–174 coordinates ATP; sequence GMGGIGKT. LRR repeat units lie at residues 543 to 567, 568 to 590, 703 to 726, 735 to 758, 759 to 786, and 808 to 833; these read LQLMRVLDLHGVEFGGELPSSIGLL, IHLRYLSLYRAKASHLPSSMQNL, MSGIEGLVLDCDQLKHLNLRIYMP, PWHLRNISLAECCLKEDPMPILEK, LLQLNEVSLSHQSFCGKRMVCSDGGFPQ, and MPRLHKLTIRNDPKLKELPDGLKFIT.

This sequence belongs to the disease resistance NB-LRR family.

Probable disease resistance protein. The polypeptide is Probable disease resistance protein At1g59620 (Arabidopsis thaliana (Mouse-ear cress)).